A 196-amino-acid polypeptide reads, in one-letter code: ATP-dependent Clp protease proteolytic subunit (196 aa).

S99 functions as the Nucleophile in the catalytic mechanism. Residue H124 is part of the active site.

The protein belongs to the peptidase S14 family. As to quaternary structure, fourteen ClpP subunits assemble into 2 heptameric rings which stack back to back to give a disk-like structure with a central cavity, resembling the structure of eukaryotic proteasomes.

The protein resides in the cytoplasm. The enzyme catalyses Hydrolysis of proteins to small peptides in the presence of ATP and magnesium. alpha-casein is the usual test substrate. In the absence of ATP, only oligopeptides shorter than five residues are hydrolyzed (such as succinyl-Leu-Tyr-|-NHMec, and Leu-Tyr-Leu-|-Tyr-Trp, in which cleavage of the -Tyr-|-Leu- and -Tyr-|-Trp bonds also occurs).. Functionally, cleaves peptides in various proteins in a process that requires ATP hydrolysis. Has a chymotrypsin-like activity. Plays a major role in the degradation of misfolded proteins. The sequence is that of ATP-dependent Clp protease proteolytic subunit from Helicobacter hepaticus (strain ATCC 51449 / 3B1).